We begin with the raw amino-acid sequence, 278 residues long: Dermonecrotic toxin LhSicTox-alphaIV1iii (278 aa).

H5 is an active-site residue. Residues E25 and D27 each coordinate Mg(2+). The Nucleophile role is filled by H41. 2 disulfide bridges follow: C45–C51 and C47–C192. A Mg(2+)-binding site is contributed by D85.

It belongs to the arthropod phospholipase D family. Class II subfamily. It depends on Mg(2+) as a cofactor. As to expression, expressed by the venom gland.

It localises to the secreted. The catalysed reaction is an N-(acyl)-sphingosylphosphocholine = an N-(acyl)-sphingosyl-1,3-cyclic phosphate + choline. It catalyses the reaction an N-(acyl)-sphingosylphosphoethanolamine = an N-(acyl)-sphingosyl-1,3-cyclic phosphate + ethanolamine. The enzyme catalyses a 1-acyl-sn-glycero-3-phosphocholine = a 1-acyl-sn-glycero-2,3-cyclic phosphate + choline. It carries out the reaction a 1-acyl-sn-glycero-3-phosphoethanolamine = a 1-acyl-sn-glycero-2,3-cyclic phosphate + ethanolamine. Functionally, dermonecrotic toxins cleave the phosphodiester linkage between the phosphate and headgroup of certain phospholipids (sphingolipid and lysolipid substrates), forming an alcohol (often choline) and a cyclic phosphate. This toxin acts on sphingomyelin (SM). It may also act on ceramide phosphoethanolamine (CPE), lysophosphatidylcholine (LPC) and lysophosphatidylethanolamine (LPE), but not on lysophosphatidylserine (LPS), and lysophosphatidylglycerol (LPG). It acts by transphosphatidylation, releasing exclusively cyclic phosphate products as second products. Induces dermonecrosis, hemolysis, increased vascular permeability, edema, inflammatory response, and platelet aggregation. The polypeptide is Dermonecrotic toxin LhSicTox-alphaIV1iii (Loxosceles hirsuta (Recluse spider)).